The primary structure comprises 440 residues: COP9 signalosome complex subunit 5 (440 aa).

In terms of domain architecture, MPN spans 71–218; the sequence is VLISKLSCEK…MGAFRTIESK (148 aa). His-164, His-166, and Asp-177 together coordinate Zn(2+). A JAMM motif motif is present at residues 164–177; the sequence is HSHPGYDCWLSNID. The span at 319-341 shows a compositional bias: polar residues; the sequence is TQRGDSTETSSFGSMFSGDNTSD. Disordered regions lie at residues 319-343 and 375-399; these read TQRGDSTETSSFGSMFSGDNTSDVD and SSRSTDNFHNSKKRMNSNQERCHDE.

This sequence belongs to the peptidase M67A family. CSN5 subfamily. As to quaternary structure, component of a COP9 signalosome-like (CSN) complex, composed of at least RRI1/CSN5, CSN9, RRI2/CSN10, PCI8/CSN11, CSN12 and CSI1. Within this complex it probably interacts directly with CSN12. Also interacts with RPN5. A divalent metal cation serves as cofactor.

It localises to the cytoplasm. Its subcellular location is the nucleus. Catalytic component of the COP9 signalosome (CSN) complex that acts as an regulator of the ubiquitin (Ubl) conjugation pathway by mediating the deneddylation of the cullin subunit of SCF-type E3 ubiquitin-protein ligase complexes. The CSN complex is involved in the regulation of the mating pheromone response. This chain is COP9 signalosome complex subunit 5 (RRI1), found in Saccharomyces cerevisiae (strain ATCC 204508 / S288c) (Baker's yeast).